Here is a 390-residue protein sequence, read N- to C-terminus: Lipid-A-disaccharide synthase (390 aa).

Belongs to the LpxB family.

The enzyme catalyses a lipid X + a UDP-2-N,3-O-bis[(3R)-3-hydroxyacyl]-alpha-D-glucosamine = a lipid A disaccharide + UDP + H(+). Its pathway is bacterial outer membrane biogenesis; LPS lipid A biosynthesis. Condensation of UDP-2,3-diacylglucosamine and 2,3-diacylglucosamine-1-phosphate to form lipid A disaccharide, a precursor of lipid A, a phosphorylated glycolipid that anchors the lipopolysaccharide to the outer membrane of the cell. The sequence is that of Lipid-A-disaccharide synthase from Haemophilus ducreyi (strain 35000HP / ATCC 700724).